The primary structure comprises 582 residues: Hemagglutinin-neuraminidase (582 aa).

Residues Met1 to Arg34 are Intravirion-facing. Residues Ile35 to Leu55 form a helical; Signal-anchor for type II membrane protein membrane-spanning segment. At Ile56–Thr582 the chain is on the virion surface side. 3 cysteine pairs are disulfide-bonded: Cys178-Cys202, Cys192-Cys253, and Cys244-Cys257. Positions Asn240–Ser245 are involved in neuraminidase activity. N-linked (GlcNAc...) asparagine; by host glycans are attached at residues Asn284 and Asn329. 3 cysteine pairs are disulfide-bonded: Cys350–Cys471, Cys382–Cys392, and Cys465–Cys475. N-linked (GlcNAc...) asparagine; by host glycans are attached at residues Asn400 and Asn448. Residue Asn507 is glycosylated (N-linked (GlcNAc...) asparagine; by host). Cys545 and Cys556 are oxidised to a cystine.

Belongs to the paramyxoviruses hemagglutinin-neuraminidase family. In terms of assembly, homotetramer; composed of disulfide-linked homodimers. Interacts with F protein trimer.

It localises to the virion membrane. The protein localises to the host cell membrane. It catalyses the reaction Hydrolysis of alpha-(2-&gt;3)-, alpha-(2-&gt;6)-, alpha-(2-&gt;8)- glycosidic linkages of terminal sialic acid residues in oligosaccharides, glycoproteins, glycolipids, colominic acid and synthetic substrates.. Attaches the virus to alpha-2,3-linked sialic acid-containing cell receptors and thereby initiating infection. Binding of HN protein to the receptor induces a conformational change that allows the F protein to trigger virion/cell membranes fusion. Binds to the glycan motifs sialyl Lewis (SLe) and GM2 ganglioside (GM2-glycan). Functionally, neuraminidase activity ensures the efficient spread of the virus by dissociating the mature virions from the neuraminic acid containing glycoproteins. In Homo sapiens (Human), this protein is Hemagglutinin-neuraminidase (HN).